Here is a 338-residue protein sequence, read N- to C-terminus: tRNA N6-adenosine threonylcarbamoyltransferase (338 aa).

Residues H109 and H113 each coordinate Fe cation. Substrate is bound by residues 132 to 136 (AISGA), D165, G178, and N277. D302 provides a ligand contact to Fe cation.

Belongs to the KAE1 / TsaD family. It depends on Fe(2+) as a cofactor.

The protein resides in the cytoplasm. It catalyses the reaction L-threonylcarbamoyladenylate + adenosine(37) in tRNA = N(6)-L-threonylcarbamoyladenosine(37) in tRNA + AMP + H(+). Its function is as follows. Required for the formation of a threonylcarbamoyl group on adenosine at position 37 (t(6)A37) in tRNAs that read codons beginning with adenine. Is involved in the transfer of the threonylcarbamoyl moiety of threonylcarbamoyl-AMP (TC-AMP) to the N6 group of A37, together with TsaE and TsaB. TsaD likely plays a direct catalytic role in this reaction. This Chlamydia trachomatis serovar A (strain ATCC VR-571B / DSM 19440 / HAR-13) protein is tRNA N6-adenosine threonylcarbamoyltransferase.